The chain runs to 194 residues: Large ribosomal subunit protein bL9 (194 aa).

It belongs to the bacterial ribosomal protein bL9 family.

Its function is as follows. Binds to the 23S rRNA. The polypeptide is Large ribosomal subunit protein bL9 (Paracoccus denitrificans (strain Pd 1222)).